A 402-amino-acid chain; its full sequence is Secondary metabolism regulator laeA (402 aa).

The tract at residues 1–70 (MSLKYYLNDL…MSPTEVCSTD (70 aa)) is disordered. The segment covering 11–21 (SDSDSESESEC) has biased composition (acidic residues).

It belongs to the methyltransferase superfamily. LaeA methyltransferase family.

It localises to the nucleus. The catalysed reaction is L-methionyl-[protein] + S-adenosyl-L-methionine = S-methyl-L-methionyl-[protein] + S-adenosyl-L-homocysteine. Its function is as follows. Methyltransferase that performs automethylation. No other methyl-accepting substrate has been identified yet. Acts as a global regulator for secondary metabolite gene expression. Negatively regulates the production of coprinoferrin, a structurally novel acylated tripeptide hydroxamate siderophore. The polypeptide is Secondary metabolism regulator laeA (Coprinopsis cinerea (strain Okayama-7 / 130 / ATCC MYA-4618 / FGSC 9003) (Inky cap fungus)).